The primary structure comprises 309 residues: Ribose-phosphate pyrophosphokinase (309 aa).

ATP is bound by residues 37–39 and 96–97; these read DGE and RQ. Mg(2+) contacts are provided by histidine 130 and aspartate 169. Residue lysine 192 is part of the active site. Residues arginine 194, aspartate 218, and 222-226 contribute to the D-ribose 5-phosphate site; that span reads DTAGT.

It belongs to the ribose-phosphate pyrophosphokinase family. Class I subfamily. Homohexamer. Mg(2+) serves as cofactor.

It is found in the cytoplasm. It carries out the reaction D-ribose 5-phosphate + ATP = 5-phospho-alpha-D-ribose 1-diphosphate + AMP + H(+). The protein operates within metabolic intermediate biosynthesis; 5-phospho-alpha-D-ribose 1-diphosphate biosynthesis; 5-phospho-alpha-D-ribose 1-diphosphate from D-ribose 5-phosphate (route I): step 1/1. In terms of biological role, involved in the biosynthesis of the central metabolite phospho-alpha-D-ribosyl-1-pyrophosphate (PRPP) via the transfer of pyrophosphoryl group from ATP to 1-hydroxyl of ribose-5-phosphate (Rib-5-P). The polypeptide is Ribose-phosphate pyrophosphokinase (Helicobacter hepaticus (strain ATCC 51449 / 3B1)).